Here is a 105-residue protein sequence, read N- to C-terminus: Small ribosomal subunit protein uS10c (105 aa).

Belongs to the universal ribosomal protein uS10 family. In terms of assembly, part of the 30S ribosomal subunit.

It localises to the plastid. The protein localises to the cyanelle. Its function is as follows. Involved in the binding of tRNA to the ribosomes. In Cyanophora paradoxa, this protein is Small ribosomal subunit protein uS10c (rps10).